A 27-amino-acid polypeptide reads, in one-letter code: MIINHNMSAINAQRVQGBVTGVTKNMV.

Belongs to the bacterial flagellin family. As to quaternary structure, the flagellum consists of an outer layer composed of repeating units of FlaA around a core that contains one or all of five antigenically related polypeptides.

Its subcellular location is the periplasmic flagellum. The protein localises to the periplasm. In terms of biological role, component of the core of the flagella. The polypeptide is Flagellar filament 34 kDa core protein (Spirochaeta aurantia).